We begin with the raw amino-acid sequence, 185 residues long: uncharacterized protein (185 aa).

Transmembrane regions (helical) follow at residues 4-24 (IAWM…LGLA), 35-55 (GLLF…ATGV), 60-80 (GASA…SIAY), 123-143 (VLAY…INDS), and 152-172 (ILKL…SYFI).

It localises to the cell membrane. This is an uncharacterized protein from Bacillus subtilis (strain 168).